A 320-amino-acid polypeptide reads, in one-letter code: Cytochrome f (320 aa).

The signal sequence occupies residues 1–35 (MQNRNTFSWIKEQMTRSISVSIMIYVITRTAISNA). The heme site is built by tyrosine 36, cysteine 56, cysteine 59, and histidine 60. A helical membrane pass occupies residues 286–306 (VQGLLFFLASVILAQIFLVLK).

This sequence belongs to the cytochrome f family. The 4 large subunits of the cytochrome b6-f complex are cytochrome b6, subunit IV (17 kDa polypeptide, petD), cytochrome f and the Rieske protein, while the 4 small subunits are PetG, PetL, PetM and PetN. The complex functions as a dimer. Heme serves as cofactor.

Its subcellular location is the plastid. The protein resides in the chloroplast thylakoid membrane. Functionally, component of the cytochrome b6-f complex, which mediates electron transfer between photosystem II (PSII) and photosystem I (PSI), cyclic electron flow around PSI, and state transitions. This Platanus occidentalis (Sycamore) protein is Cytochrome f.